We begin with the raw amino-acid sequence, 358 residues long: Stearoyl-CoA desaturase 2 (358 aa).

Topologically, residues 1 to 71 (MPAHILQEIS…EGPPPKLEYV (71 aa)) are cytoplasmic. Residues 16-39 (TTTITAPPSGGQQNGGEKFEKSSH) are disordered. The chain crosses the membrane as a helical span at residues 72–92 (WRNIILMALLHLGALYGITLV). Residue Asn-74 coordinates substrate. Residues 93–96 (PSCK) lie on the Lumenal side of the membrane. Residues 97–117 (LYTCLFAYLYYVISALGITAG) traverse the membrane as a helical segment. Topologically, residues 118-216 (AHRLWSHRTY…EKLVMFQRRY (99 aa)) are cytoplasmic. The Fe cation site is built by His-119 and His-124. A Histidine box-1 motif is present at residues 119-124 (HRLWSH). Residues Asn-147, Arg-154, and Asp-155 each contribute to the substrate site. Fe cation is bound by residues His-156, His-159, and His-160. The Histidine box-2 signature appears at 156–160 (HRAHH). Residues Arg-187 and Lys-188 each contribute to the substrate site. The helical transmembrane segment at 217–236 (YKPGLLLMCFVLPTLVPWYC) threads the bilayer. At 237–240 (WGET) the chain is on the lumenal side. Residues 241 to 262 (FVNSLCVSTFLRYAVVLNATWL) form a helical membrane-spanning segment. Trp-261 provides a ligand contact to substrate. The Cytoplasmic portion of the chain corresponds to 263 to 358 (VNSAAHLYGY…RTGDGSCKSG (96 aa)). His-268, His-297, His-300, and His-301 together coordinate Fe cation. The short motif at 297-301 (HNYHH) is the Histidine box-3 element.

Belongs to the fatty acid desaturase type 1 family. Requires Fe(2+) as cofactor. In terms of tissue distribution, detected in brain and skin. Highly expressed in brain, and detected at low levels in heart, stomach, lung and testis. Detected both in dermis and epidermis.

It localises to the endoplasmic reticulum membrane. The protein resides in the microsome membrane. The catalysed reaction is octadecanoyl-CoA + 2 Fe(II)-[cytochrome b5] + O2 + 2 H(+) = (9Z)-octadecenoyl-CoA + 2 Fe(III)-[cytochrome b5] + 2 H2O. The enzyme catalyses hexadecanoyl-CoA + 2 Fe(II)-[cytochrome b5] + O2 + 2 H(+) = (9Z)-hexadecenoyl-CoA + 2 Fe(III)-[cytochrome b5] + 2 H2O. In terms of biological role, stearoyl-CoA desaturase that utilizes O(2) and electrons from reduced cytochrome b5 to introduce the first double bond into saturated fatty acyl-CoA substrates. Catalyzes the insertion of a cis double bond at the delta-9 position into fatty acyl-CoA substrates including palmitoyl-CoA and stearoyl-CoA. Gives rise to a mixture of 16:1 and 18:1 unsaturated fatty acids. Contributes to the biosynthesis of membrane phospholipids, cholesterol esters and triglycerides, especially during embryonic development and in neonates. Important for normal permeability barrier function of the skin in neonates. The protein is Stearoyl-CoA desaturase 2 (Scd2) of Mus musculus (Mouse).